A 210-amino-acid polypeptide reads, in one-letter code: ATP-dependent Clp protease proteolytic subunit (210 aa).

Serine 107 functions as the Nucleophile in the catalytic mechanism. The active site involves histidine 132.

This sequence belongs to the peptidase S14 family. In terms of assembly, fourteen ClpP subunits assemble into 2 heptameric rings which stack back to back to give a disk-like structure with a central cavity, resembling the structure of eukaryotic proteasomes.

It is found in the cytoplasm. It catalyses the reaction Hydrolysis of proteins to small peptides in the presence of ATP and magnesium. alpha-casein is the usual test substrate. In the absence of ATP, only oligopeptides shorter than five residues are hydrolyzed (such as succinyl-Leu-Tyr-|-NHMec, and Leu-Tyr-Leu-|-Tyr-Trp, in which cleavage of the -Tyr-|-Leu- and -Tyr-|-Trp bonds also occurs).. Functionally, cleaves peptides in various proteins in a process that requires ATP hydrolysis. Has a chymotrypsin-like activity. Plays a major role in the degradation of misfolded proteins. This chain is ATP-dependent Clp protease proteolytic subunit, found in Chromobacterium violaceum (strain ATCC 12472 / DSM 30191 / JCM 1249 / CCUG 213 / NBRC 12614 / NCIMB 9131 / NCTC 9757 / MK).